We begin with the raw amino-acid sequence, 304 residues long: Aspartate carbamoyltransferase catalytic subunit (304 aa).

Positions 49 and 50 each coordinate carbamoyl phosphate. Lysine 77 contacts L-aspartate. Carbamoyl phosphate contacts are provided by arginine 99, histidine 127, and glutamine 130. L-aspartate contacts are provided by arginine 160 and arginine 211. Carbamoyl phosphate is bound by residues alanine 252 and proline 253.

This sequence belongs to the aspartate/ornithine carbamoyltransferase superfamily. ATCase family. In terms of assembly, heterododecamer (2C3:3R2) of six catalytic PyrB chains organized as two trimers (C3), and six regulatory PyrI chains organized as three dimers (R2).

The enzyme catalyses carbamoyl phosphate + L-aspartate = N-carbamoyl-L-aspartate + phosphate + H(+). Its pathway is pyrimidine metabolism; UMP biosynthesis via de novo pathway; (S)-dihydroorotate from bicarbonate: step 2/3. Its function is as follows. Catalyzes the condensation of carbamoyl phosphate and aspartate to form carbamoyl aspartate and inorganic phosphate, the committed step in the de novo pyrimidine nucleotide biosynthesis pathway. The sequence is that of Aspartate carbamoyltransferase catalytic subunit from Bacillus cereus (strain ATCC 10987 / NRS 248).